The chain runs to 124 residues: Small ribosomal subunit protein uS12 (124 aa).

The tract at residues 1–32 (MPTIQQLVRKGRQAKASKTKTPALKGSPQRRG) is disordered. The span at 9–18 (RKGRQAKASK) shows a compositional bias: basic residues. Asp-89 carries the post-translational modification 3-methylthioaspartic acid.

It belongs to the universal ribosomal protein uS12 family. As to quaternary structure, part of the 30S ribosomal subunit. Contacts proteins S8 and S17. May interact with IF1 in the 30S initiation complex.

With S4 and S5 plays an important role in translational accuracy. Its function is as follows. Interacts with and stabilizes bases of the 16S rRNA that are involved in tRNA selection in the A site and with the mRNA backbone. Located at the interface of the 30S and 50S subunits, it traverses the body of the 30S subunit contacting proteins on the other side and probably holding the rRNA structure together. The combined cluster of proteins S8, S12 and S17 appears to hold together the shoulder and platform of the 30S subunit. This chain is Small ribosomal subunit protein uS12, found in Acidothermus cellulolyticus (strain ATCC 43068 / DSM 8971 / 11B).